Reading from the N-terminus, the 634-residue chain is RING finger protein 207 (634 aa).

Residues 25-63 (CHLCQEQYEHPCLLDCYHTFCASCLRGRVADSRLTCPVC) form an RING-type zinc finger. The B box-type; atypical zinc finger occupies 93–145 (EETVQCANCDLECKKQDVDAMYYCNTCCQPLCRDCRETTHKAKMFSRHEIVSL). Residues Cys-98, Cys-101, Cys-127, and His-132 each contribute to the Zn(2+) site. The disordered stretch occupies residues 575-634 (YEDSTSTADTQPSNELSCNTEDNWTLNSLSEETNPKNKDYYRTNKQKNTTDSTNRKEIPM). Over residues 577–606 (DSTSTADTQPSNELSCNTEDNWTLNSLSEE) the composition is skewed to polar residues. Basic and acidic residues predominate over residues 607 to 616 (TNPKNKDYYR).

Its subcellular location is the cytoplasm. In terms of biological role, plays a role in cardiac repolarization possibly by stabilizing membrane expression of the potassium channel kcnh6a/zerg, or by assisting its synthesis, folding or export from the endoplasmic reticulum, in a heat shock protein-dependent manner. This chain is RING finger protein 207 (rnf207b), found in Danio rerio (Zebrafish).